A 433-amino-acid polypeptide reads, in one-letter code: Histidine--tRNA ligase (433 aa).

It belongs to the class-II aminoacyl-tRNA synthetase family. As to quaternary structure, homodimer.

The protein localises to the cytoplasm. It carries out the reaction tRNA(His) + L-histidine + ATP = L-histidyl-tRNA(His) + AMP + diphosphate + H(+). This is Histidine--tRNA ligase from Azoarcus sp. (strain BH72).